Reading from the N-terminus, the 755-residue chain is Polyribonucleotide nucleotidyltransferase (755 aa).

Mg(2+) is bound by residues D482 and D488. A KH domain is found at 549-608 (PRMVSFYIDKDKISAAIGAKGKNIRSVCERSNAKIEIGDDGKVSVFAMSSAEAEIAKNMM). The S1 motif domain occupies 618-686 (GAIVDVKVVK…KGGCPKLSRR (69 aa)). The span at 702 to 714 (NEEKKDSSNDRDY) shows a compositional bias: basic and acidic residues. A disordered region spans residues 702–755 (NEEKKDSSNDRDYYNSPFNRKSGHRKRPVHSRSSFSNRNNRPKFGNDDSSSSFY). The segment covering 722-731 (KSGHRKRPVH) has biased composition (basic residues).

It belongs to the polyribonucleotide nucleotidyltransferase family. The cofactor is Mg(2+).

Its subcellular location is the cytoplasm. The catalysed reaction is RNA(n+1) + phosphate = RNA(n) + a ribonucleoside 5'-diphosphate. Involved in mRNA degradation. Catalyzes the phosphorolysis of single-stranded polyribonucleotides processively in the 3'- to 5'-direction. This is Polyribonucleotide nucleotidyltransferase from Wolbachia sp. subsp. Brugia malayi (strain TRS).